The sequence spans 246 residues: tRNA pseudouridine synthase C (246 aa).

Residue Asp58 is part of the active site.

Belongs to the pseudouridine synthase RluA family.

It carries out the reaction uridine(65) in tRNA = pseudouridine(65) in tRNA. Functionally, responsible for synthesis of pseudouridine from uracil-65 in transfer RNAs. The polypeptide is tRNA pseudouridine synthase C (truC) (Vibrio parahaemolyticus serotype O3:K6 (strain RIMD 2210633)).